The following is a 1701-amino-acid chain: MKIIFFLCSFLFFIINTQCVTHESYQELVKKLEALEDAVLTGYSLFQKEKMVLNEGTSGTAVTTSTPGSSGSVTSGGSVASVASVASGGSGGSVASGGSGNSRRTNPSDNSSDSNTKTYADLKHRVQNYLFTIKELKYPELFDLTNHMLTLSKNVDGFKYLIDGYEEINELLYKLNFYYDLLRAKLNDACANSYCQIPFNLKIRANELDVLKKIVFGYRKPLDNIKDNVGKMEDYIKKNKTTIANINELIEGSKKTIDQNKNADNEEGKKKLYQAQYNLFIYNKQLQEAHNLISVLEKRIDTLKKNENIKKLLEDIDKIKTDAENPTTGSKPNPLPENKKKEVEGHEEKIKEIAKTIKFNIDSLFTDPLELEYYLREKNKKVDVTPKSQDPTKSVQIPKVPYPNGIVYPLPLTDIHNSLAADNDKNSYGDLMNPDTKEKINEKIITDNKERKIFINNIKKQIDLEEKNINHTKEQNKKLLEDYEKSKKDYEELLEKFYEMKFNNNFDKDVVDKIFSARYTYNVEKQRYNNKFSSSNNSVYNVQKLKKALSYLEDYSLRKGISEKDFNHYYTLKTGLEADIKKLTEEIKSSENKILEKNFKGLTHSANASLEVSDIVKLQVQKVLLIKKIEDLRKIELFLKNAQLKDSIHVPNIYKPQNKPEPYYLIVLKKEVDKLKEFIPKVKDMLKKEQAVLSSITQPLVAASETTEDGGHSTHTLSQSGETEVTEETEVTEETVGHTTTVTITLPPKEESAPKEVKVVENSIEHKSNDNSQALTKTVYLKKLDEFLTKSYICHKYILVSNSSMDQKLLEVYNLTPEEENELKSCDPLDLLFNIQNNIPAMYSLYDSMNIDLQHLFFELYQKEMIYYLHKLKEENHIKKLLEEQKQITGTSSTSSPGNTTVNTAQSATHSNSQNQQSNASSTNTQNGVAVSSGPAVVEESHDPLTVLSISNDLKGIVSLLNLGNKTKVPNPLTISTTEMEKFYENILKNNDTYFNDDIKQFVKSNSKVITGLTETQKNALNDEIKKLKDTLQLSFDLYNKYKLKLDRLFNKKKELGQDKMQIKKLTLLKEQLESKLNSLNNPHNVLQNFSVFFNKKKEAEIAETENTLENTKILLKHYKGLVKYYNGESSPLKTLSEVSIQTEDNYANLEKFRALSKIDGKLNDNLHLGKKKLSFLSSGLHHLITELKEVIKNKNYTGNSPSENNKKVNEALKSYENFLPEAKVTTVVTPPQPDVTPSPLSVRVSGSSGSTKEETQIPTSGSLLTELQQVVQLQNYDEEDDSLVVLPIFGESEDNDEYLDQVVTGEAISVTMDNILSGFENEYDVIYLKPLAGVYRSLKKQIEKNIITFNLNLNDILNSRLKKRKYFLDVLESDLMQFKHISSNEYIIEDSFKLLNSEQKNTLLKSYKYIKESVENDIKFAQEGISYYEKVLAKYKDDLESIKKVIKEEKEKFPSSPPTTPPSPAKTDEQKKESKFLPFLTNIETLYNNLVNKIDDYLINLKAKINDCNVEKDEAHVKITKLSDLKAIDDKIDLFKNTNDFEAIKKLINDDTKKDMLGKLLSTGLVQNFPNTIISKLIEGKFQDMLNISQHQCVKKQCPENSGCFRHLDEREECKCLLNYKQEGDKCVENPNPTCNENNGGCDADATCTEEDSGSSRKKITCECTKPDSYPLFDGIFCSSSNFLGISFLLILMLILYSFI.

The N-terminal stretch at 1–19 (MKIIFFLCSFLFFIINTQC) is a signal peptide. Residues 89 to 100 (GSGGSVASGGSG) are compositionally biased toward gly residues. A disordered region spans residues 89–118 (GSGGSVASGGSGNSRRTNPSDNSSDSNTKT). Low complexity predominate over residues 101–116 (NSRRTNPSDNSSDSNT). Asn-110 and Asn-239 each carry an N-linked (GlcNAc...) asparagine glycan. The tract at residues 322–344 (DAENPTTGSKPNPLPENKKKEVE) is disordered. 3 N-linked (GlcNAc...) asparagine glycosylation sites follow: Asn-470, Asn-536, and Asn-607. The disordered stretch occupies residues 704-739 (SETTEDGGHSTHTLSQSGETEVTEETEVTEETVGHT). Residues 724 to 733 (EVTEETEVTE) show a composition bias toward acidic residues. Residues Asn-802, Asn-899, Asn-919, Asn-965, Asn-991, Asn-1089, and Asn-1196 are each glycosylated (N-linked (GlcNAc...) asparagine). Positions 889 to 927 (TGTSSTSSPGNTTVNTAQSATHSNSQNQQSNASSTNTQN) are enriched in low complexity. A disordered region spans residues 889–936 (TGTSSTSSPGNTTVNTAQSATHSNSQNQQSNASSTNTQNGVAVSSGPA). Disordered regions lie at residues 1231-1259 (PPQP…TQIP) and 1451-1472 (KEKF…DEQK). The span at 1245 to 1259 (VSGSSGSTKEETQIP) shows a compositional bias: polar residues. Residues 1456-1465 (SSPPTTPPSP) show a composition bias toward pro residues. Residue Asn-1588 is glycosylated (N-linked (GlcNAc...) asparagine). EGF-like domains are found at residues 1592-1632 (HQCV…VENP) and 1633-1680 (NPTC…IFCS). 6 cysteine pairs are disulfide-bonded: Cys-1594-Cys-1605, Cys-1599-Cys-1615, Cys-1617-Cys-1628, Cys-1636-Cys-1649, Cys-1643-Cys-1663, and Cys-1665-Cys-1679. Ser-1680 carries the GPI-anchor amidated serine lipid modification. The propeptide at 1681–1701 (SSNFLGISFLLILMLILYSFI) is removed in mature form.

In terms of assembly, forms a complex composed of subunits p83, p30, p38, and p42 which remain non-covalently associated; the complex is formed at the merozoite surface prior to egress from host erythrocytes. Forms a complex composed of processed MSP1 subunits, MSP6 subunit p36 and MSP7; the complex is formed at the merozoite surface prior to egress from host erythrocytes. Within the complex, interacts (via subunit p38) with MSP6 subunit p36 and (via subunits p83, p30 and p38) with MSP7 (via subunit p22). Forms a complex composed of MSP1, MSP6, DBLMSP1 and DBLMSP2. Within the complex, interacts (via subunit p38) with DBLMSP1 and DBLMSP2. Forms a complex composed of MSP1, and rhoptry proteins RhopH3, RAP1 and CLAG9/RhopH3. Within the complex, interacts (via subunits p42 and p19) with RhopH3 (via C-terminus). Forms a complex composed of MSP1, MSP6, MSP7, MSP9 and MSP3; within the complex, MSP6 and MSP9 mediate the binding to the host erythrocyte. Interacts (via subunits p19 and p42) with MSP9; the interaction is direct; MSP1 subunits p19 or p42, and MSP9 form a co-ligand complex that interacts with host SLC4A1/Band 3 protein. May interact with PFD6. Interacts with host spectrin. Interacts with host glycophorin GYPA in a sialic acid-independent manner. As to quaternary structure, interacts with host proinflammatory cytokine S100P; the interaction blocks S100P inflammatory and chemotactic activities. In terms of assembly, interacts with host SLC4A1/Band 3 (via 5ABC region) on the host erythrocyte surface in a sialic acid-independent manner. Post-translationally, the p190 precursor is cleaved by SUB1 prior to merozoite egress into 4 subunits p83, p30, p38, and p42 which remain non-covalently associated. SUB1-mediated proteolytic cleavage occurs in an orderly manner; the first cleavage occurs at the p30/p38 site, followed by cleavage at the p83/p30 site, in the 3D7 strain a second cleavage occurs at the N-terminus of p83, the last cleavage occurs at the p38/p42 site. The order of cleavage is essential for parasite viability. SUB1-mediated processing is essential for merozoite egress. In a second processing step during erythrocyte invasion, p42 is cleaved by SUB2 into p33 and p19; the latter remains attached to the merozoite surface via its GPI-anchor and is endocytosed during the subsequent ring stage.

The protein resides in the cell membrane. The protein localises to the secreted. Its subcellular location is the vacuole membrane. Its function is as follows. During the asexual blood stage, involved in merozoite egress from host erythrocytes possibly via its interaction with the host cytoskeleton protein spectrin resulting in the destabilization of the host cytoskeleton and thus leading to erythrocyte cell membrane rupture. Involved in the binding to host erythrocytes and is required for host erythrocyte invasion. Functionally, by binding to host proinflammatory cytokine S100P may interfere with host immune responses. In terms of biological role, involved in merozoite invasion of host erythrocytes. May play a role in the biogenesis and/or function of the food vacuole during the intraerythrocytic development. This is Merozoite surface protein 1 from Plasmodium falciparum (isolate FC27 / Papua New Guinea).